A 313-amino-acid polypeptide reads, in one-letter code: tRNA dimethylallyltransferase (313 aa).

11–18 (GPTAAGKS) contributes to the ATP binding site. 13–18 (TAAGKS) is a binding site for substrate. Interaction with substrate tRNA stretches follow at residues 36–39 (DSAT), 160–164 (QRIQR), and 244–249 (RCVGYR).

It belongs to the IPP transferase family. Monomer. The cofactor is Mg(2+).

The enzyme catalyses adenosine(37) in tRNA + dimethylallyl diphosphate = N(6)-dimethylallyladenosine(37) in tRNA + diphosphate. Its function is as follows. Catalyzes the transfer of a dimethylallyl group onto the adenine at position 37 in tRNAs that read codons beginning with uridine, leading to the formation of N6-(dimethylallyl)adenosine (i(6)A). The protein is tRNA dimethylallyltransferase of Bordetella pertussis (strain Tohama I / ATCC BAA-589 / NCTC 13251).